Reading from the N-terminus, the 219-residue chain is Adenylate kinase (219 aa).

Residue 10-15 (GAGKGT) coordinates ATP. Positions 30-59 (STGDMLRAAVKAGTPLGQQAKKIMDEGGLV) are NMP. AMP is bound by residues threonine 31, arginine 36, 57-59 (GLV), 85-88 (GFPR), and glutamine 92. Residues 122–159 (GRRVHPGSGRVYHVTHNPPRQEGKDDVTGEDLVQREDD) form an LID region. Residues arginine 123 and 132–133 (VY) each bind ATP. The disordered stretch occupies residues 128–150 (GSGRVYHVTHNPPRQEGKDDVTG). Over residues 140 to 150 (PRQEGKDDVTG) the composition is skewed to basic and acidic residues. The AMP site is built by arginine 156 and arginine 167. Position 203 (arginine 203) interacts with ATP.

It belongs to the adenylate kinase family. As to quaternary structure, monomer.

It is found in the cytoplasm. The enzyme catalyses AMP + ATP = 2 ADP. Its pathway is purine metabolism; AMP biosynthesis via salvage pathway; AMP from ADP: step 1/1. Functionally, catalyzes the reversible transfer of the terminal phosphate group between ATP and AMP. Plays an important role in cellular energy homeostasis and in adenine nucleotide metabolism. This chain is Adenylate kinase, found in Halorhodospira halophila (strain DSM 244 / SL1) (Ectothiorhodospira halophila (strain DSM 244 / SL1)).